We begin with the raw amino-acid sequence, 101 residues long: Gastrin (101 aa).

Positions 1–21 are cleaved as a signal peptide; the sequence is MPRLCVYMLVLVLALATFSEA. Positions 23–101 are disordered; it reads WKPRSQLQDA…FGRRSAEEDQ (79 aa). The span at 25–37 shows a compositional bias: polar residues; that stretch reads PRSQLQDASSGPG. A Sulfotyrosine modification is found at tyrosine 87. Phenylalanine 92 carries the post-translational modification Phenylalanine amide. The span at 92–101 shows a compositional bias: basic and acidic residues; the sequence is FGRRSAEEDQ. Serine 96 is subject to Phosphoserine. The propeptide occupies 96–101; sequence SAEEDQ.

This sequence belongs to the gastrin/cholecystokinin family. Post-translationally, sulfation enhances proteolytic processing, and blocks peptide degradation. Levels of sulfation differ between proteolytically-cleaved gastrins and between tissues. Abundantly expressed in the stomach and duodenum. Low levels in brain, ovary and pancreas.

It localises to the secreted. Functionally, gastrin stimulates the stomach mucosa to produce and secrete hydrochloric acid and the pancreas to secrete its digestive enzymes. It also stimulates smooth muscle contraction and increases blood circulation and water secretion in the stomach and intestine. The polypeptide is Gastrin (Gast) (Mus musculus (Mouse)).